Here is a 342-residue protein sequence, read N- to C-terminus: Ribosomal RNA small subunit methyltransferase C (342 aa).

The protein belongs to the methyltransferase superfamily. RsmC family. In terms of assembly, monomer.

The protein localises to the cytoplasm. The catalysed reaction is guanosine(1207) in 16S rRNA + S-adenosyl-L-methionine = N(2)-methylguanosine(1207) in 16S rRNA + S-adenosyl-L-homocysteine + H(+). Functionally, specifically methylates the guanine in position 1207 of 16S rRNA in the 30S particle. The sequence is that of Ribosomal RNA small subunit methyltransferase C from Salmonella agona (strain SL483).